The chain runs to 106 residues: ATP-dependent Clp protease adapter protein ClpS (106 aa).

This sequence belongs to the ClpS family. As to quaternary structure, binds to the N-terminal domain of the chaperone ClpA.

Involved in the modulation of the specificity of the ClpAP-mediated ATP-dependent protein degradation. This Nocardia farcinica (strain IFM 10152) protein is ATP-dependent Clp protease adapter protein ClpS.